The following is a 286-amino-acid chain: Energy-coupling factor transporter ATP-binding protein EcfA2 (286 aa).

One can recognise an ABC transporter domain in the interval 3 to 246 (IQFNQVSYIY…KTQLLKWHIE (244 aa)). 40 to 47 (GQTGSGKS) provides a ligand contact to ATP.

This sequence belongs to the ABC transporter superfamily. Energy-coupling factor EcfA family. Forms a stable energy-coupling factor (ECF) transporter complex composed of 2 membrane-embedded substrate-binding proteins (S component), 2 ATP-binding proteins (A component) and 2 transmembrane proteins (T component).

It localises to the cell membrane. In terms of biological role, ATP-binding (A) component of a common energy-coupling factor (ECF) ABC-transporter complex. Unlike classic ABC transporters this ECF transporter provides the energy necessary to transport a number of different substrates. The protein is Energy-coupling factor transporter ATP-binding protein EcfA2 of Staphylococcus epidermidis (strain ATCC 35984 / DSM 28319 / BCRC 17069 / CCUG 31568 / BM 3577 / RP62A).